A 501-amino-acid polypeptide reads, in one-letter code: L-ornithine N(5)-monooxygenase (501 aa).

The disordered stretch occupies residues 1–31; that stretch reads MESVERKSESSYLGMRNMQPEQRLSLDPPRL. Residues 83–91 and Q102 contribute to the FAD site; that span reads ERQKQFAWH. Position 107 (K107) interacts with substrate. V168 provides a ligand contact to FAD. NADP(+) is bound by residues 254-257 and R279; that span reads SGQS. Substrate is bound by residues 293–296 and N323; that span reads NEIF. 323–325 is a binding site for NADP(+); sequence NYS. Residues 366–390 are disordered; it reads EHHGPQSRMRIHLKSSKPESEGAAN. Over residues 381-390 the composition is skewed to basic and acidic residues; that stretch reads SKPESEGAAN. 466–468 lines the FAD pocket; the sequence is SLL. S469 lines the substrate pocket.

This sequence belongs to the lysine N(6)-hydroxylase/L-ornithine N(5)-oxygenase family. Homotetramer. FAD is required as a cofactor.

The catalysed reaction is L-ornithine + NADPH + O2 = N(5)-hydroxy-L-ornithine + NADP(+) + H2O. It catalyses the reaction L-ornithine + NADH + O2 = N(5)-hydroxy-L-ornithine + NAD(+) + H2O. It functions in the pathway siderophore biosynthesis; ferrichrome biosynthesis. Its function is as follows. L-ornithine N(5)-monooxygenase; part of the siderophore biosynthetic pathway. Aspergillus fumigatus produces four types of siderophores, low-molecular-mass iron chelators, including excreted fusarinine C (FsC) and triacetylfusarinine C (TAFC) for iron uptake; and intacellular ferricrocin (FC) for hyphal and hydroxyferricrocin (HFC) for conidial iron distribution and storage. TAFC consists of three N(2)-acetyl-N(5)-anhydromevalonyl-N(5)-hydroxyornithine residues cyclically linked by ester bonds; FC is a cyclic hexapeptide with the structure Gly-Ser-Gly-(N(5)-acetyl-N(5)-hydroxyornithine)x3. The biosynthesis of all four siderophores depends on the hydroxylation of ornithine, catalyzed by the monooxygenase sidA. SidA is highly specific for its substrate, only hydrolyzing l-ornithine, and has preference for NADPH over NADH, NADPH playing a role in stabilization of the C4a-hydroperoxyflavin intermediate. Subsequently, the pathways for biosynthesis of extra- and intracellular siderophores split. For biosynthesis of extracellular siderophores, the transacylase sidF transfers anhydromevalonyl to N(5)-hydroxyornithine. The required anhydromevalonyl-CoA moiety is derived from mevalonate by CoA ligation and dehydration catalyzed by sidI and sidH respectively. The acetylation of N(5)-hydroxyornithine for FC biosynthesis involves the constitutively expressed sidL. FC is hydroxylated to HFC by an as yet uncharacterized enzyme during conidiation. Assembly of fusarinine C (FsC) and FC is catalyzed by two different nonribosomal peptide synthetases (NRPS), sidD and sidC respectively. Subsequently, sidG catalyzes N2-acetylation of FsC for forming TAFC. Both extra- and intracellular siderophores are crucial for growth during iron limitation and virulence. This Aspergillus fumigatus (strain ATCC MYA-4609 / CBS 101355 / FGSC A1100 / Af293) (Neosartorya fumigata) protein is L-ornithine N(5)-monooxygenase.